A 518-amino-acid polypeptide reads, in one-letter code: Calcium and calcium/calmodulin-dependent serine/threonine-protein kinase (518 aa).

Residues 13–300 form the Protein kinase domain; that stretch reads YEISEILGRG…AQELLSHPWV (288 aa). ATP is bound by residues 19 to 27 and lysine 44; that span reads LGRGGFSVV. Catalysis depends on aspartate 165, which acts as the Proton acceptor. Threonine 265 is subject to Phosphothreonine. The calmodulin-binding stretch occupies residues 323–336; sequence ARRKLRAAAIASVW. Positions 344 to 365 form a coiled coil; sequence TKKLRSLVGTYDLKEEEIESLR. 3 EF-hand domains span residues 394–429, 430–465, and 472–507; these read SLIP…LKNS, KGDD…LPEE, and TEPG…DSSL. The Ca(2+) site is built by aspartate 407, asparagine 409, aspartate 411, threonine 413, glutamate 418, aspartate 443, aspartate 445, serine 447, cysteine 449, glutamate 454, aspartate 485, asparagine 487, aspartate 489, lysine 491, and glutamate 496.

Belongs to the protein kinase superfamily. CAMK Ser/Thr protein kinase family. CaMK subfamily. Interacts with IPD3. Interacts with CIP73. Autophosphorylation stimulated by calcium. Occurs probably by an intermolecular mechanism. As to expression, mainly expressed in roots and nodules. Detected in leaves, stems and cotyledons.

Its subcellular location is the nucleus. It catalyses the reaction L-seryl-[protein] + ATP = O-phospho-L-seryl-[protein] + ADP + H(+). It carries out the reaction L-threonyl-[protein] + ATP = O-phospho-L-threonyl-[protein] + ADP + H(+). Its activity is regulated as follows. Activated by calcium/calmodulin binding after calcium-induced autophosphorylation. Functionally, calcium- and calmodulin-dependent protein kinase necessary and sufficient for dedifferentiation of root cortical cells into nodule initials. Not required for calcium spiking. Acts as central regulator of the nodule organogenesis program. Required for root hair curling and infection thread (IT) formation upon rhizobial infection, and arbuscule formation during arbuscular mycorrhiza (AM) fungal infection. Phosphorylates the downstream target IPD3, a protein required for root infection by symbiotic rhizobia and AM fungi. Phosphorylates the downstream target CIP73, a protein required for root nodule organogenesis. Mediates the phosphorylation of leghemoglobins (e.g. LB1) to modulate their oxygen O(2) affinity, thus regulating the diffusion of oxygen to the bacteroids in nodules. In Lotus japonicus (Lotus corniculatus var. japonicus), this protein is Calcium and calcium/calmodulin-dependent serine/threonine-protein kinase.